A 556-amino-acid polypeptide reads, in one-letter code: Glucose-6-phosphate isomerase (556 aa).

E360 functions as the Proton donor in the catalytic mechanism. Residues H391 and K519 contribute to the active site.

Belongs to the GPI family.

It is found in the cytoplasm. The catalysed reaction is alpha-D-glucose 6-phosphate = beta-D-fructose 6-phosphate. It functions in the pathway carbohydrate biosynthesis; gluconeogenesis. Its pathway is carbohydrate degradation; glycolysis; D-glyceraldehyde 3-phosphate and glycerone phosphate from D-glucose: step 2/4. Its function is as follows. Catalyzes the reversible isomerization of glucose-6-phosphate to fructose-6-phosphate. In Acinetobacter baumannii (strain SDF), this protein is Glucose-6-phosphate isomerase.